The chain runs to 276 residues: MSSSSAAALGSDDGCSPAELRPSRYESQKRRDWQTFTQYLAAHRPPLELRRCSGAHVLEFLRYLDRFGKTRVHEPPCPSYGGRSPSAAGPVAAAAAACQCPLRQAWGSLDALVGRLRAAYDERHGRAGEPDAVAGAGAVATDSTSSSSAAAANPFAARAVRLYLRDVRDAQAMARGISYHKKKKRRGGNMNGARGGGGGGARAGVNDGDATAPPVAVTPGLPLPPLPPCLNGVPFEYCDFGSVLGGAHGAHGGHGGGGGGFYGAGVYLPFLYNTFS.

Disordered regions lie at residues 1–30 (MSSSSAAALGSDDGCSPAELRPSRYESQKR) and 178–213 (SYHKKKKRRGGNMNGARGGGGGGARAGVNDGDATAP). Basic and acidic residues predominate over residues 21–30 (RPSRYESQKR). Residues 24-183 (RYESQKRRDW…ARGISYHKKK (160 aa)) form the ALOG domain. Residues 178 to 187 (SYHKKKKRRG) show a composition bias toward basic residues. Residues 181–185 (KKKKR) carry the Nuclear localization signal motif. Residues 189–202 (NMNGARGGGGGGAR) are compositionally biased toward gly residues. The span at 203–213 (AGVNDGDATAP) shows a compositional bias: low complexity.

The protein belongs to the plant homeotic and developmental regulators ALOG protein family. Expressed at the empty glumes of immature spikelets, which are lemmas of the sterile florets located at the lateral side of the spikelet, throughout their development.

The protein localises to the nucleus. Probable transcription regulator that acts as a developmental regulator by promoting cell growth in response to light. Transcription regulator that restrains empty glumes growth, lemmas of the sterile florets located at the lateral side of the rice spikelet, to maintain their small size, probably by repressing lemma identity via transcription regulation. The protein is Protein G1 (G1) of Oryza sativa subsp. japonica (Rice).